Reading from the N-terminus, the 361-residue chain is Molybdopterin synthase catalytic subunit (361 aa).

Substrate-binding positions include 101–102, K117, and 124–126; these read HR and KKE.

It belongs to the MoaE family. MOCS2B subfamily. Heterotetramer; composed of 2 small (Mocs2A) and 2 large (Mocs2B) subunits.

The protein localises to the cytoplasm. The enzyme catalyses 2 [molybdopterin-synthase sulfur-carrier protein]-C-terminal-Gly-aminoethanethioate + cyclic pyranopterin phosphate + H2O = molybdopterin + 2 [molybdopterin-synthase sulfur-carrier protein]-C-terminal Gly-Gly + 2 H(+). It participates in cofactor biosynthesis; molybdopterin biosynthesis. Functionally, catalytic subunit of the molybdopterin synthase complex, a complex that catalyzes the conversion of precursor Z into molybdopterin. Acts by mediating the incorporation of 2 sulfur atoms from thiocarboxylated Mocs2A into precursor Z to generate a dithiolene group. The sequence is that of Molybdopterin synthase catalytic subunit from Drosophila pseudoobscura pseudoobscura (Fruit fly).